Here is a 284-residue protein sequence, read N- to C-terminus: 4-diphosphocytidyl-2-C-methyl-D-erythritol kinase (284 aa).

The active site involves lysine 9. 90–100 (PLVSGLGGDSS) serves as a coordination point for ATP. The active site involves aspartate 132.

It belongs to the GHMP kinase family. IspE subfamily.

The catalysed reaction is 4-CDP-2-C-methyl-D-erythritol + ATP = 4-CDP-2-C-methyl-D-erythritol 2-phosphate + ADP + H(+). It functions in the pathway isoprenoid biosynthesis; isopentenyl diphosphate biosynthesis via DXP pathway; isopentenyl diphosphate from 1-deoxy-D-xylulose 5-phosphate: step 3/6. Functionally, catalyzes the phosphorylation of the position 2 hydroxy group of 4-diphosphocytidyl-2C-methyl-D-erythritol. The chain is 4-diphosphocytidyl-2-C-methyl-D-erythritol kinase from Dehalococcoides mccartyi (strain ATCC BAA-2266 / KCTC 15142 / 195) (Dehalococcoides ethenogenes (strain 195)).